A 563-amino-acid polypeptide reads, in one-letter code: Alpha-keto-acid decarboxylase (563 aa).

Glu59 is a thiamine diphosphate binding site. The interval 348 to 367 is disordered; it reads SPPVASPPAEPLPPPPPREQ. A compositionally biased stretch (pro residues) spans 351–366; it reads VASPPAEPLPPPPPRE. Residues 394–476 are thiamine pyrophosphate binding; that stretch reads TSFYGMADHR…VVVNNDGYTV (83 aa). The Mg(2+) site is built by Asp444, Asn471, and Gly473.

This sequence belongs to the TPP enzyme family. A metal cation serves as cofactor. Requires thiamine diphosphate as cofactor.

Its function is as follows. Decarboxylates branched-chain and aromatic alpha-keto acids to aldehydes. This Mycobacterium avium (strain 104) protein is Alpha-keto-acid decarboxylase (kdc).